Here is a 162-residue protein sequence, read N- to C-terminus: uncharacterized protein (162 aa).

Over residues 65–76 (EEKPLEVAQDRN) the composition is skewed to basic and acidic residues. A disordered region spans residues 65–93 (EEKPLEVAQDRNNKRKAPSHLEPAHDFIS).

This is an uncharacterized protein from Bacillus subtilis (strain 168).